The chain runs to 258 residues: Phosphoadenosine 5'-phosphosulfate reductase (258 aa).

Cysteine 244 functions as the Nucleophile; cysteine thiosulfonate intermediate in the catalytic mechanism.

This sequence belongs to the PAPS reductase family. CysH subfamily.

The protein localises to the cytoplasm. The catalysed reaction is [thioredoxin]-disulfide + sulfite + adenosine 3',5'-bisphosphate + 2 H(+) = [thioredoxin]-dithiol + 3'-phosphoadenylyl sulfate. It functions in the pathway sulfur metabolism; hydrogen sulfide biosynthesis; sulfite from sulfate: step 3/3. Its function is as follows. Catalyzes the formation of sulfite from phosphoadenosine 5'-phosphosulfate (PAPS) using thioredoxin as an electron donor. This chain is Phosphoadenosine 5'-phosphosulfate reductase, found in Vibrio vulnificus (strain CMCP6).